The sequence spans 267 residues: Shikimate dehydrogenase (NADP(+)) (267 aa).

Residues S14–S16 and T61 each bind shikimate. K65 (proton acceptor) is an active-site residue. Shikimate contacts are provided by N86 and D101. Residues G126 to A130, N150 to K155, and L213 contribute to the NADP(+) site. Shikimate is bound at residue Y215. G236 contributes to the NADP(+) binding site.

Belongs to the shikimate dehydrogenase family. Homodimer.

The catalysed reaction is shikimate + NADP(+) = 3-dehydroshikimate + NADPH + H(+). It functions in the pathway metabolic intermediate biosynthesis; chorismate biosynthesis; chorismate from D-erythrose 4-phosphate and phosphoenolpyruvate: step 4/7. Functionally, involved in the biosynthesis of the chorismate, which leads to the biosynthesis of aromatic amino acids. Catalyzes the reversible NADPH linked reduction of 3-dehydroshikimate (DHSA) to yield shikimate (SA). This is Shikimate dehydrogenase (NADP(+)) from Ruthia magnifica subsp. Calyptogena magnifica.